Consider the following 283-residue polypeptide: Acetylglutamate kinase (283 aa).

Residues 64 to 65 (GG), R86, and N178 each bind substrate.

The protein belongs to the acetylglutamate kinase family. ArgB subfamily.

The protein resides in the cytoplasm. The catalysed reaction is N-acetyl-L-glutamate + ATP = N-acetyl-L-glutamyl 5-phosphate + ADP. The protein operates within amino-acid biosynthesis; L-arginine biosynthesis; N(2)-acetyl-L-ornithine from L-glutamate: step 2/4. Catalyzes the ATP-dependent phosphorylation of N-acetyl-L-glutamate. This Lactococcus lactis subsp. cremoris (strain MG1363) protein is Acetylglutamate kinase.